We begin with the raw amino-acid sequence, 232 residues long: Flagellar L-ring protein (232 aa).

The N-terminal stretch at M1–G21 is a signal peptide. C22 carries the N-palmitoyl cysteine lipid modification. C22 is lipidated: S-diacylglycerol cysteine.

Belongs to the FlgH family. The basal body constitutes a major portion of the flagellar organelle and consists of four rings (L,P,S, and M) mounted on a central rod.

It is found in the cell outer membrane. The protein localises to the bacterial flagellum basal body. Functionally, assembles around the rod to form the L-ring and probably protects the motor/basal body from shearing forces during rotation. In Shigella boydii serotype 4 (strain Sb227), this protein is Flagellar L-ring protein.